The following is a 115-amino-acid chain: MKIALVLLSLLALTLAESNISPPVVKVYTAEPVDFGKTNEVICYVYNYHPPRLEMRLEKNGVEIPDCKQTDPSFQHNWKYYTTKSTHVHIDKGDKVECVVSHNGNPSKKYRLDIF.

An N-terminal signal peptide occupies residues 1–16 (MKIALVLLSLLALTLA). In terms of domain architecture, Ig-like C1-type spans 22–113 (PPVVKVYTAE…GNPSKKYRLD (92 aa)).

Belongs to the beta-2-microglobulin family. As to quaternary structure, heterodimer of an alpha chain and a beta chain. Beta-2-microglobulin is the beta-chain of major histocompatibility complex class I molecules.

It localises to the secreted. In terms of biological role, component of the class I major histocompatibility complex (MHC). Involved in the presentation of peptide antigens to the immune system. The protein is Beta-2-microglobulin (b2m) of Xenopus laevis (African clawed frog).